A 460-amino-acid polypeptide reads, in one-letter code: Ribosomal protein uS12 methylthiotransferase RimO (460 aa).

The region spanning 9 to 119 (PKVGFVSLGC…VMEAVHAALP (111 aa)) is the MTTase N-terminal domain. C18, C54, C83, C150, C154, and C157 together coordinate [4Fe-4S] cluster. The region spanning 136–374 (LTPRHYAYLK…AKQAEISALR (239 aa)) is the Radical SAM core domain. A TRAM domain is found at 376 to 444 (EAKIGSVQQC…EHDLFGDALP (69 aa)).

Belongs to the methylthiotransferase family. RimO subfamily. [4Fe-4S] cluster serves as cofactor.

The protein localises to the cytoplasm. It catalyses the reaction L-aspartate(89)-[ribosomal protein uS12]-hydrogen + (sulfur carrier)-SH + AH2 + 2 S-adenosyl-L-methionine = 3-methylsulfanyl-L-aspartate(89)-[ribosomal protein uS12]-hydrogen + (sulfur carrier)-H + 5'-deoxyadenosine + L-methionine + A + S-adenosyl-L-homocysteine + 2 H(+). Its function is as follows. Catalyzes the methylthiolation of an aspartic acid residue of ribosomal protein uS12. This Xanthomonas oryzae pv. oryzae (strain PXO99A) protein is Ribosomal protein uS12 methylthiotransferase RimO.